The chain runs to 607 residues: Synaptotagmin-like protein 3 (607 aa).

The region spanning 4-123 is the RabBD domain; the sequence is EVDLESFKEL…IKTGEWFFEE (120 aa). The interval 221–279 is disordered; that stretch reads VGHTERRSQSDTAVNVTSRKASTPDILKAFHQEDPKHPPDPVLKQDTPPSSPTHSAVFS. Polar residues predominate over residues 230 to 241; sequence SDTAVNVTSRKA. Over residues 248–259 the composition is skewed to basic and acidic residues; the sequence is KAFHQEDPKHPP. C2 domains follow at residues 305–430 and 458–590; these read VTGE…ARWY and LPAG…LQWH.

Monomer. Binds NRXN1. Binds RAB27A that has been activated by GTP-binding via its N-terminus. As to expression, highly expressed in spleen and lung. Detected at lower levels in heart and testis.

The protein localises to the endomembrane system. May act as Rab effector protein and play a role in vesicle trafficking. Binds phospholipids in the presence of calcium ions. The protein is Synaptotagmin-like protein 3 (Sytl3) of Mus musculus (Mouse).